Consider the following 264-residue polypeptide: Low molecular mass lipoprotein PBMHPC-23 (264 aa).

The first 23 residues, 1–23, serve as a signal peptide directing secretion; sequence MKFLVVFAVVRACVTPACAEMSA.

It belongs to the 30 kDa lipoprotein family.

The protein localises to the secreted. The polypeptide is Low molecular mass lipoprotein PBMHPC-23 (Bombyx mori (Silk moth)).